Here is a 388-residue protein sequence, read N- to C-terminus: S-adenosylmethionine synthase (388 aa).

An ATP-binding site is contributed by His14. Residue Asp16 participates in Mg(2+) binding. Glu42 serves as a coordination point for K(+). The L-methionine site is built by Glu55 and Gln98. Positions 98–108 (QSAEISSAVDQ) are flexible loop. ATP is bound by residues 166–168 (DGK), Asp242, 248–249 (RK), Ala265, and Lys269. Asp242 is an L-methionine binding site. Lys273 contributes to the L-methionine binding site.

It belongs to the AdoMet synthase family. As to quaternary structure, homotetramer; dimer of dimers. The cofactor is Mg(2+). K(+) is required as a cofactor.

The protein localises to the cytoplasm. The enzyme catalyses L-methionine + ATP + H2O = S-adenosyl-L-methionine + phosphate + diphosphate. Its pathway is amino-acid biosynthesis; S-adenosyl-L-methionine biosynthesis; S-adenosyl-L-methionine from L-methionine: step 1/1. Functionally, catalyzes the formation of S-adenosylmethionine (AdoMet) from methionine and ATP. The overall synthetic reaction is composed of two sequential steps, AdoMet formation and the subsequent tripolyphosphate hydrolysis which occurs prior to release of AdoMet from the enzyme. This is S-adenosylmethionine synthase from Oenococcus oeni (strain ATCC BAA-331 / PSU-1).